The following is a 185-amino-acid chain: Ribosome-recycling factor (185 aa).

It belongs to the RRF family.

It is found in the cytoplasm. Responsible for the release of ribosomes from messenger RNA at the termination of protein biosynthesis. May increase the efficiency of translation by recycling ribosomes from one round of translation to another. The polypeptide is Ribosome-recycling factor (Alkaliphilus oremlandii (strain OhILAs) (Clostridium oremlandii (strain OhILAs))).